A 168-amino-acid polypeptide reads, in one-letter code: uncharacterized protein (168 aa).

Residues 1–15 show a composition bias toward basic and acidic residues; sequence MKEASDREEAPKMVE. The disordered stretch occupies residues 1-36; the sequence is MKEASDREEAPKMVEKNYSTGFRKAHGEKDQSVTKP.

It localises to the cytoplasm. This is an uncharacterized protein from Saccharomyces cerevisiae (strain ATCC 204508 / S288c) (Baker's yeast).